Reading from the N-terminus, the 335-residue chain is MAISTFSIGDLGYLRNFLQNECNWFRICKKTFYREYRSVATSSPIFSLKNKPKKYCMHCEMVVLKRSHEFMFSLAVNGIHFGQFLTGIMKFKKKQVAEGLCYYVLELGSISPVDLSFIPKYNSDCVTSMHCVTPELIYENCSIVCPEEASRLTVKGLGDNKLIPLGGCGVWCLKNGGDLYIYAFVLAYDLYVACYDKTIFPSLAKIVFDMIACDSEDCVFCKDHNKHVSQAGHIVGCVSNQETCFCYTPCQKKMTDINNPELISLLCDQEINKIDIMYPEKKASLSLDINSYVHGYLGDEPCALKCVNWMPIRISSALSRLIILSCPVCKRVVMD.

The protein belongs to the herpesviridae cytoplasmic envelopment protein 2 family. As to quaternary structure, interacts with cytoplasmic envelopment protein 3 and with the capsid.

It localises to the virion tegument. Its subcellular location is the host cytoplasm. It is found in the host nucleus. Functionally, plays a critical role in cytoplasmic virus egress. Participates in the final step of tegumentation and envelope acquisition within the host cytoplasm by directly interacting with the capsid. Upon virion binding to target cell, a signaling cascade is triggered to disrupt the interaction with the capsid, thereby preparing capsid uncoating. This Human herpesvirus 6B (strain Z29) (HHV-6 variant B) protein is Cytoplasmic envelopment protein 2 (U65).